The sequence spans 200 residues: Protein-methionine-sulfoxide reductase heme-binding subunit MsrQ (200 aa).

5 consecutive transmembrane segments (helical) span residues 8–28 (ITWL…WLFY), 54–74 (LLLA…PLLI), 79–99 (LLGL…SLLE), 116–136 (PYLT…LTSF), and 153–173 (FIYL…KILS).

It belongs to the MsrQ family. In terms of assembly, heterodimer of a catalytic subunit (MsrP) and a heme-binding subunit (MsrQ). Requires FMN as cofactor. Heme b is required as a cofactor.

It localises to the cell inner membrane. Its function is as follows. Part of the MsrPQ system that repairs oxidized periplasmic proteins containing methionine sulfoxide residues (Met-O), using respiratory chain electrons. Thus protects these proteins from oxidative-stress damage caused by reactive species of oxygen and chlorine generated by the host defense mechanisms. MsrPQ is essential for the maintenance of envelope integrity under bleach stress, rescuing a wide series of structurally unrelated periplasmic proteins from methionine oxidation. MsrQ provides electrons for reduction to the reductase catalytic subunit MsrP, using the quinone pool of the respiratory chain. This Cronobacter sakazakii (strain ATCC BAA-894) (Enterobacter sakazakii) protein is Protein-methionine-sulfoxide reductase heme-binding subunit MsrQ.